We begin with the raw amino-acid sequence, 517 residues long: Acetylcholine receptor subunit delta (517 aa).

Residues 1-21 form the signal peptide; that stretch reads MAGPVPTLGLLAALVVCGSWG. Over 22–245 the chain is Extracellular; it reads LNEEQRLIQH…VTFYLIIRRK (224 aa). Residues Asn-97, Asn-164, and Asn-190 are each glycosylated (N-linked (GlcNAc...) asparagine). Cys-151 and Cys-165 are joined by a disulfide. 3 helical membrane-spanning segments follow: residues 246-270, 278-296, and 312-333; these read PLFY…VFYL, TSVA…LLIS, and FLLF…VLNI. The Cytoplasmic segment spans residues 334-471; that stretch reads HFRTPSTHVL…WNQVARTVDR (138 aa). Residue Tyr-390 is modified to Phosphotyrosine; by Tyr-kinases. A helical transmembrane segment spans residues 472-490; it reads LCLFVVTPVMVVGTAWIFL.

Belongs to the ligand-gated ion channel (TC 1.A.9) family. Acetylcholine receptor (TC 1.A.9.1) subfamily. Delta/CHRND sub-subfamily. In terms of assembly, pentamer of two alpha chains, and one each of the beta, delta, and gamma (in immature muscle) or epsilon (in mature muscle) chains. The muscle heteropentamer composed of alpha-1, beta-1, delta, epsilon subunits interacts with the alpha-conotoxin ImII.

Its subcellular location is the postsynaptic cell membrane. It localises to the cell membrane. The enzyme catalyses K(+)(in) = K(+)(out). It catalyses the reaction Na(+)(in) = Na(+)(out). In terms of biological role, after binding acetylcholine, the AChR responds by an extensive change in conformation that affects all subunits and leads to opening of an ion-conducting channel across the plasma membrane. This chain is Acetylcholine receptor subunit delta (Chrnd), found in Rattus norvegicus (Rat).